Consider the following 100-residue polypeptide: Putative pterin-4-alpha-carbinolamine dehydratase (100 aa).

The protein belongs to the pterin-4-alpha-carbinolamine dehydratase family.

The enzyme catalyses (4aS,6R)-4a-hydroxy-L-erythro-5,6,7,8-tetrahydrobiopterin = (6R)-L-erythro-6,7-dihydrobiopterin + H2O. The polypeptide is Putative pterin-4-alpha-carbinolamine dehydratase (Rhodopseudomonas palustris (strain ATCC BAA-98 / CGA009)).